Consider the following 110-residue polypeptide: Cytochrome c6 (110 aa).

The signal sequence occupies residues 1–25; that stretch reads MKKKLSVLFTVFSFFVIGFAQIAFA. 4 residues coordinate heme c: C39, C42, H43, and M83.

It belongs to the cytochrome c family. PetJ subfamily. In terms of assembly, monomer. Post-translationally, binds 1 heme c group covalently per subunit.

The protein localises to the plastid. It localises to the chloroplast thylakoid lumen. Functions as an electron carrier between membrane-bound cytochrome b6-f and photosystem I in oxygenic photosynthesis. This Pyropia yezoensis (Susabi-nori) protein is Cytochrome c6 (petJ).